Here is a 535-residue protein sequence, read N- to C-terminus: ATP-dependent RNA helicase DBP3 (535 aa).

A compositionally biased stretch (basic and acidic residues) spans 1 to 21 (MSKHELKDKKRKSVDGEDVSK). Positions 1 to 82 (MSKHELKDKK…GSETAPVGDS (82 aa)) are disordered. Residues 22-33 (SKKVKKDKKDKK) are compositionally biased toward basic residues. The span at 34–72 (DKKAKDGNDKVKDKKDKNKKDKSKTDKNLKEVQETEAHT) shows a compositional bias: basic and acidic residues. The Q motif motif lies at 125–151 (LSFSHLNLHSAIQKEISKFPKPTPIQA). Residues 154-327 (WPYLLAGKDV…STFMRAPVKV (174 aa)) form the Helicase ATP-binding domain. 167–174 (AETGSGKT) contacts ATP. A DEAD box motif is present at residues 274–277 (DEAD). Residues 352-505 (KKEKRLLELL…PVPEELMKFG (154 aa)) enclose the Helicase C-terminal domain.

It belongs to the DEAD box helicase family. DDX5/DBP2 subfamily.

It is found in the nucleus. It localises to the nucleolus. The enzyme catalyses ATP + H2O = ADP + phosphate + H(+). In terms of biological role, ATP-dependent RNA helicase required for 60S ribosomal subunit synthesis. Involved in efficient pre-rRNA processing, predominantly at site A3, which is necessary for the normal formation of 25S and 5.8S rRNAs. The chain is ATP-dependent RNA helicase DBP3 (DBP3) from Eremothecium gossypii (strain ATCC 10895 / CBS 109.51 / FGSC 9923 / NRRL Y-1056) (Yeast).